The primary structure comprises 244 residues: Mitophagy receptor atg43 (244 aa).

The tract at residues M1–W24 is disordered. The Cytoplasmic portion of the chain corresponds to M1–H198. The short motif at Y28–I31 is the atg8 interacting motif (AIM) element. Residues S105–E131 form a disordered region. Over residues E113–E131 the composition is skewed to acidic residues. Residues P165 to N184 are involved in MIM complex binding. Required for normal vegetative cell population growth but is dispensable for mitophagy. Residues V199–I215 form a helical membrane-spanning segment. Topologically, residues F216–D244 are mitochondrial intermembrane.

Interacts (via N-terminal atg8 interacting motif) with atg8; the interaction is direct. Interacts with the mitochondrial outer import machinery (MIM) complex subunits mim1 and mim2.

Its subcellular location is the mitochondrion outer membrane. Its function is as follows. Mitophagy receptor that tethers atg8 to the mitochondrial outer membrane to promote selective autophagy. The sequence is that of Mitophagy receptor atg43 from Schizosaccharomyces pombe (strain 972 / ATCC 24843) (Fission yeast).